Consider the following 200-residue polypeptide: MKFSPLLDEMMKALQVLPGVGPKSAQRMAFTLLERERSGGLRLAQLLSRALTEIGHCSHCRTFTENERCEICANPKREENGLLCVVESPADVAAIEQTGQFSGRYFVLMGHLSPLDGIGPEELGLEILERRLKDEAISELILATNPTIEGDATAWYIADMARAAGVKVSRIAHGVPVGGELELVDGTTLSHSLMGRQPLN.

Residues 57-72 form a C4-type zinc finger; that stretch reads CSHCRTFTENERCEIC. Positions 81 to 176 constitute a Toprim domain; that stretch reads GLLCVVESPA…KVSRIAHGVP (96 aa).

The protein belongs to the RecR family.

Its function is as follows. May play a role in DNA repair. It seems to be involved in an RecBC-independent recombinational process of DNA repair. It may act with RecF and RecO. The protein is Recombination protein RecR of Aeromonas hydrophila subsp. hydrophila (strain ATCC 7966 / DSM 30187 / BCRC 13018 / CCUG 14551 / JCM 1027 / KCTC 2358 / NCIMB 9240 / NCTC 8049).